Here is a 72-residue protein sequence, read N- to C-terminus: VKRPMNAFMVWSQHERRKIMDQWPDMHNAEISKRLGRRWQLLQDSEKIPFVKGAERLRLKHMADYADYKYRP.

Residues 1–69 (VKRPMNAFMV…KHMADYADYK (69 aa)) constitute a DNA-binding region (HMG box).

It localises to the nucleus. The protein is SRY-related protein ADW2 of Alligator mississippiensis (American alligator).